The following is a 432-amino-acid chain: Trigger factor (432 aa).

The 86-residue stretch at 161-246 (GTRATINFVG…VVKVEARELP (86 aa)) folds into the PPIase FKBP-type domain.

Belongs to the FKBP-type PPIase family. Tig subfamily.

The protein resides in the cytoplasm. It catalyses the reaction [protein]-peptidylproline (omega=180) = [protein]-peptidylproline (omega=0). Functionally, involved in protein export. Acts as a chaperone by maintaining the newly synthesized protein in an open conformation. Functions as a peptidyl-prolyl cis-trans isomerase. This Aliivibrio fischeri (strain MJ11) (Vibrio fischeri) protein is Trigger factor.